We begin with the raw amino-acid sequence, 490 residues long: Cytochrome P450 2C55 (490 aa).

Cys435 provides a ligand contact to heme.

It belongs to the cytochrome P450 family. Heme serves as cofactor.

It localises to the endoplasmic reticulum membrane. It is found in the microsome membrane. It carries out the reaction an organic molecule + reduced [NADPH--hemoprotein reductase] + O2 = an alcohol + oxidized [NADPH--hemoprotein reductase] + H2O + H(+). Functionally, metabolizes arachidonic acid mainly to 19-hydroxyeicosatetraenoic acid (HETE). The chain is Cytochrome P450 2C55 (Cyp2c55) from Rattus norvegicus (Rat).